A 235-amino-acid polypeptide reads, in one-letter code: Phosphoribosylaminoimidazole-succinocarboxamide synthase (235 aa).

Belongs to the SAICAR synthetase family.

It catalyses the reaction 5-amino-1-(5-phospho-D-ribosyl)imidazole-4-carboxylate + L-aspartate + ATP = (2S)-2-[5-amino-1-(5-phospho-beta-D-ribosyl)imidazole-4-carboxamido]succinate + ADP + phosphate + 2 H(+). It functions in the pathway purine metabolism; IMP biosynthesis via de novo pathway; 5-amino-1-(5-phospho-D-ribosyl)imidazole-4-carboxamide from 5-amino-1-(5-phospho-D-ribosyl)imidazole-4-carboxylate: step 1/2. The protein is Phosphoribosylaminoimidazole-succinocarboxamide synthase of Streptococcus pneumoniae (strain ATCC 700669 / Spain 23F-1).